The chain runs to 311 residues: MIDLLIIAGPTAVGKTDISIKLAEKLNGEIISADSMQIYKYMDIGSAKITKDEMKGIPHHLIDVVEPHEEFNVSSFKALAEKSIKDIWNRGKLPIIAGGTGLYINSLIYNYDFTDADRDEKYREYLTKLAEDKGKEYVHSLLKDIDKESYEKLYPNDLKRVVRALEVYKITGKSISEYTKENEKKLYDIPYNVNYFILNMNREVLYERINKRVDIMMGKGLIEEVKKLESMGYTPDMQSMKGIGYKEVLFYLNGDISLDEAIYLIKKGSRNYAKRQLTWFRKDKRSIWIDKDKYRSEEEIVDKIIKMVKDK.

9–16 (GPTAVGKT) lines the ATP pocket. Position 11–16 (11–16 (TAVGKT)) interacts with substrate. Positions 34–37 (DSMQ) are interaction with substrate tRNA.

This sequence belongs to the IPP transferase family. As to quaternary structure, monomer. Mg(2+) serves as cofactor.

It catalyses the reaction adenosine(37) in tRNA + dimethylallyl diphosphate = N(6)-dimethylallyladenosine(37) in tRNA + diphosphate. In terms of biological role, catalyzes the transfer of a dimethylallyl group onto the adenine at position 37 in tRNAs that read codons beginning with uridine, leading to the formation of N6-(dimethylallyl)adenosine (i(6)A). This chain is tRNA dimethylallyltransferase, found in Clostridium botulinum (strain Hall / ATCC 3502 / NCTC 13319 / Type A).